A 487-amino-acid chain; its full sequence is Multiple inositol polyphosphate phosphatase 1 (487 aa).

A signal peptide spans 1–30 (MLRAPGCLLRTSVAPAAALAAALLSSLARC). The active site involves H89. 2 N-linked (GlcNAc...) asparagine glycosylation sites follow: N242 and N481. The Prevents secretion from ER motif lies at 484-487 (SDEL).

It belongs to the histidine acid phosphatase family. MINPP1 subfamily. N-glycosylated. Widely expressed with highest levels in kidney, liver, cerebellum and placenta.

The protein localises to the endoplasmic reticulum lumen. Its subcellular location is the secreted. It is found in the cell membrane. It carries out the reaction 1D-myo-inositol hexakisphosphate + H2O = 1D-myo-inositol 1,2,4,5,6-pentakisphosphate + phosphate. It catalyses the reaction 1D-myo-inositol 1,2,4,5,6-pentakisphosphate + H2O = 1D-myo-inositol 1,2,5,6-tetrakisphosphate + phosphate. The enzyme catalyses 1D-myo-inositol 1,2,5,6-tetrakisphosphate + H2O = 1D-myo-inositol 1,2,6-trisphosphate + phosphate. The catalysed reaction is 1D-myo-inositol 1,2,6-trisphosphate + H2O = 1D-myo-inositol 1,2-bisphosphate + phosphate. It carries out the reaction 1D-myo-inositol 1,2-bisphosphate + H2O = 1D-myo-inositol 2-phosphate + phosphate. It catalyses the reaction 1D-myo-inositol hexakisphosphate + H2O = 1D-myo-inositol 1,2,3,5,6-pentakisphosphate + phosphate. The enzyme catalyses 1D-myo-inositol 1,2,3,5,6-pentakisphosphate + H2O = 1D-myo-inositol 1,2,3,6-tetrakisphosphate + phosphate. The catalysed reaction is 1D-myo-inositol 1,2,3,6-tetrakisphosphate + H2O = 1D-myo-inositol 1,2,3-trisphosphate + phosphate. It carries out the reaction 1D-myo-inositol 1,2,3-trisphosphate + H2O = 1D-myo-inositol 2,3-bisphosphate + phosphate. It catalyses the reaction 1D-myo-inositol 2,3-bisphosphate + H2O = 1D-myo-inositol 2-phosphate + phosphate. The enzyme catalyses 1D-myo-inositol 1,3,4,5,6-pentakisphosphate + H2O = 1D-myo-inositol 1,4,5,6-tetrakisphosphate + phosphate. The catalysed reaction is 1D-myo-inositol 1,4,5,6-tetrakisphosphate + H2O = 1D-myo-inositol 1,4,5-trisphosphate + phosphate. It carries out the reaction (2R)-2,3-bisphosphoglycerate + H2O = (2R)-2-phosphoglycerate + phosphate. In terms of biological role, multiple inositol polyphosphate phosphatase that hydrolyzes 1D-myo-inositol 1,3,4,5,6-pentakisphosphate (InsP5[2OH]) and 1D-myo-inositol hexakisphosphate (InsP6) to a range of less phosphorylated inositol phosphates. This regulates the availability of these various small molecule second messengers and metal chelators which control many aspects of cell physiology. Has a weak in vitro activity towards 1D-myo-inositol 1,4,5-trisphosphate which is unlikely to be physiologically relevant. By regulating intracellular inositol polyphosphates pools, which act as metal chelators, it may control the availability of intracellular calcium and iron, which are important for proper neuronal development and homeostasis. May have a dual substrate specificity, and function as a 2,3-bisphosphoglycerate 3-phosphatase hydrolyzing 2,3-bisphosphoglycerate to 2-phosphoglycerate. 2,3-bisphosphoglycerate (BPG) is formed as part of the Rapoport-Luebering glycolytic bypass and is a regulator of systemic oxygen homeostasis as the major allosteric effector of hemoglobin. This chain is Multiple inositol polyphosphate phosphatase 1, found in Homo sapiens (Human).